Consider the following 341-residue polypeptide: N-acetyl-gamma-glutamyl-phosphate reductase (341 aa).

Residue Cys-151 is part of the active site.

The protein belongs to the NAGSA dehydrogenase family. Type 1 subfamily.

The protein resides in the cytoplasm. It catalyses the reaction N-acetyl-L-glutamate 5-semialdehyde + phosphate + NADP(+) = N-acetyl-L-glutamyl 5-phosphate + NADPH + H(+). It participates in amino-acid biosynthesis; L-arginine biosynthesis; N(2)-acetyl-L-ornithine from L-glutamate: step 3/4. Its function is as follows. Catalyzes the NADPH-dependent reduction of N-acetyl-5-glutamyl phosphate to yield N-acetyl-L-glutamate 5-semialdehyde. This chain is N-acetyl-gamma-glutamyl-phosphate reductase, found in Chlorobaculum tepidum (strain ATCC 49652 / DSM 12025 / NBRC 103806 / TLS) (Chlorobium tepidum).